A 108-amino-acid chain; its full sequence is Large ribosomal subunit protein uL24 (108 aa).

This sequence belongs to the universal ribosomal protein uL24 family. As to quaternary structure, part of the 50S ribosomal subunit.

Its function is as follows. One of two assembly initiator proteins, it binds directly to the 5'-end of the 23S rRNA, where it nucleates assembly of the 50S subunit. Functionally, one of the proteins that surrounds the polypeptide exit tunnel on the outside of the subunit. The sequence is that of Large ribosomal subunit protein uL24 from Salinispora tropica (strain ATCC BAA-916 / DSM 44818 / JCM 13857 / NBRC 105044 / CNB-440).